The sequence spans 326 residues: Beta-ketoacyl-[acyl-carrier-protein] synthase III (326 aa).

Active-site residues include C115 and H253. Residues 254–258 form an ACP-binding region; that stretch reads QANKR. Residue N283 is part of the active site.

The protein belongs to the thiolase-like superfamily. FabH family. As to quaternary structure, homodimer.

It is found in the cytoplasm. The enzyme catalyses malonyl-[ACP] + acetyl-CoA + H(+) = 3-oxobutanoyl-[ACP] + CO2 + CoA. It participates in lipid metabolism; fatty acid biosynthesis. Its function is as follows. Catalyzes the condensation reaction of fatty acid synthesis by the addition to an acyl acceptor of two carbons from malonyl-ACP. Catalyzes the first condensation reaction which initiates fatty acid synthesis and may therefore play a role in governing the total rate of fatty acid production. Possesses both acetoacetyl-ACP synthase and acetyl transacylase activities. Its substrate specificity determines the biosynthesis of branched-chain and/or straight-chain of fatty acids. This Bradyrhizobium diazoefficiens (strain JCM 10833 / BCRC 13528 / IAM 13628 / NBRC 14792 / USDA 110) protein is Beta-ketoacyl-[acyl-carrier-protein] synthase III.